The chain runs to 296 residues: Tuberculosinyl adenosine transferase (296 aa).

It belongs to the diterpene synthase family. As to quaternary structure, homodimer. Mg(2+) serves as cofactor.

The catalysed reaction is tuberculosinyl diphosphate + adenosine + H(+) = 1-tuberculosinyladenosine + diphosphate. It catalyses the reaction tuberculosinyl diphosphate + H2O = tuberculosinol + diphosphate. It carries out the reaction tuberculosinyl diphosphate + H2O = (13R)-edaxadiene + diphosphate. The enzyme catalyses tuberculosinyl diphosphate + H2O = (13S)-edaxadiene + diphosphate. In terms of biological role, tuberculosinyl transferase that catalyzes the condensation of adenosine and tuberculosinyl diphosphate (TbPP) to generate 1-tuberculosinyladenosine (1-TbAd), which acts as an antiacid that directly protects M.tuberculosis from acid pH and physically remodels M.tuberculosis phagolysosomes. In addition, acts as a phosphatase that catalyzes the diphosphate-removal from TbPP to produce both tuberculosinol (TOH) and isotuberculosinol (iso-TOH). The protein is Tuberculosinyl adenosine transferase of Mycobacterium tuberculosis (strain CDC 1551 / Oshkosh).